Consider the following 704-residue polypeptide: Polyribonucleotide nucleotidyltransferase (704 aa).

Mg(2+) is bound by residues Asp485 and Asp491. The 60-residue stretch at 552–611 (PKTETIQIDPDKIRSVIGAGGKVINKIIQDTGVKIDIKEDGSVFVSSSDHAGVKEAIKII) folds into the KH domain. In terms of domain architecture, S1 motif spans 621-689 (GEIYLGKVTK…SQGRINLSRK (69 aa)).

It belongs to the polyribonucleotide nucleotidyltransferase family. The cofactor is Mg(2+).

Its subcellular location is the cytoplasm. The catalysed reaction is RNA(n+1) + phosphate = RNA(n) + a ribonucleoside 5'-diphosphate. In terms of biological role, involved in mRNA degradation. Catalyzes the phosphorolysis of single-stranded polyribonucleotides processively in the 3'- to 5'-direction. In Clostridium botulinum (strain Eklund 17B / Type B), this protein is Polyribonucleotide nucleotidyltransferase.